Consider the following 283-residue polypeptide: Quinate/shikimate dehydrogenase (NAD(+)) (283 aa).

Shikimate-binding residues include Ser17, Thr69, Lys73, Asn94, and Asp110. L-quinate contacts are provided by residues 17 to 19 (SRT), Thr69, Lys73, Asn94, and Asp110. The active-site Proton acceptor is Lys73. NAD(+)-binding positions include 137–138 (GV), Asp158, Arg163, 203–206 (PMGM), Ala213, Val228, and Gly251. Position 258 (Gln258) interacts with shikimate. L-quinate is bound at residue Gln258.

This sequence belongs to the shikimate dehydrogenase family. Homodimer.

It catalyses the reaction L-quinate + NAD(+) = 3-dehydroquinate + NADH + H(+). The enzyme catalyses shikimate + NAD(+) = 3-dehydroshikimate + NADH + H(+). Its pathway is metabolic intermediate biosynthesis; chorismate biosynthesis; chorismate from D-erythrose 4-phosphate and phosphoenolpyruvate: step 4/7. It functions in the pathway aromatic compound metabolism; 3,4-dihydroxybenzoate biosynthesis; 3-dehydroquinate from D-quinate (NAD(+) route). Involved in the biosynthesis of the chorismate, which leads to the biosynthesis of aromatic amino acids, and plays a key role in the quinate degradation pathway. Catalyzes the NAD(+)-dependent oxidation of both quinate and shikimate to 3-dehydroquinate and 3-dehydroshikimate, respectively. This Corynebacterium glutamicum (strain R) protein is Quinate/shikimate dehydrogenase (NAD(+)).